Here is a 163-residue protein sequence, read N- to C-terminus: Putative H/ACA ribonucleoprotein complex subunit 2-like protein (163 aa).

Positions 1–27 (MGKRNLDETMNESTVSEANGDATAPTT) are disordered.

This sequence belongs to the eukaryotic ribosomal protein eL8 family. Component of the small nucleolar ribonucleoprotein particle containing H/ACA-type snoRNAs (H/ACA snoRNPs).

The protein resides in the nucleus. The protein localises to the nucleolus. Functionally, required for ribosome biogenesis. Part of a complex which catalyzes pseudouridylation of rRNA. This involves the isomerization of uridine such that the ribose is subsequently attached to C5, instead of the normal N1. Pseudouridine ('psi') residues may serve to stabilize the conformation of rRNAs. The sequence is that of Putative H/ACA ribonucleoprotein complex subunit 2-like protein from Caenorhabditis elegans.